A 283-amino-acid polypeptide reads, in one-letter code: 2-heptyl-4(1H)-quinolone synthase subunit PqsB (283 aa).

Belongs to the thiolase-like superfamily. FabH family. In terms of assembly, forms a tight complex with PqsC.

The protein resides in the cytoplasm. Activity of the complex is inhibited by 2-aminoacetophenone (2-AA). Required for the biosynthesis of the quorum-sensing signaling molecules 2-heptyl-4(1H)-quinolone (HHQ) and 2-heptyl-3-hydroxy-4(1H)-quinolone (Pseudomonas quinolone signal or PQS), which are important for biofilm formation and virulence. The PqsC/PqsB complex catalyzes the condensation of 2-aminobenzoylacetate (2-ABA) and octanoyl-CoA to form HHQ. PqsB, together with PqsC, catalyzes the coupling of 2-ABA with the octanoate group, leading to decarboxylation and dehydration, and resulting in closure of the quinoline ring. PqsB is probably required for the proper folding of PqsC rather than for a direct enzymatic role in the process. The chain is 2-heptyl-4(1H)-quinolone synthase subunit PqsB from Pseudomonas aeruginosa (strain ATCC 15692 / DSM 22644 / CIP 104116 / JCM 14847 / LMG 12228 / 1C / PRS 101 / PAO1).